The primary structure comprises 108 residues: Protein phosphatase 1 regulatory subunit 1C (108 aa).

The disordered stretch occupies residues 25-108 (AEQIRKRRPT…ASEREEKWNH (84 aa)). Positions 45-54 (NSPEIDEKRV) are enriched in basic and acidic residues. Residues 55 to 73 (TNTQESQNASPKQRKQSVY) show a composition bias toward polar residues. A compositionally biased stretch (basic and acidic residues) spans 99–108 (ASEREEKWNH).

The protein belongs to the protein phosphatase inhibitor 1 family.

It localises to the cytoplasm. In terms of biological role, may increase cell susceptibility to TNF-induced apoptosis. The protein is Protein phosphatase 1 regulatory subunit 1C (Ppp1r1c) of Mus musculus (Mouse).